The sequence spans 109 residues: Ribonuclease P protein component (109 aa).

It belongs to the RnpA family. As to quaternary structure, consists of a catalytic RNA component (M1 or rnpB) and a protein subunit.

The enzyme catalyses Endonucleolytic cleavage of RNA, removing 5'-extranucleotides from tRNA precursor.. Its function is as follows. RNaseP catalyzes the removal of the 5'-leader sequence from pre-tRNA to produce the mature 5'-terminus. It can also cleave other RNA substrates such as 4.5S RNA. The protein component plays an auxiliary but essential role in vivo by binding to the 5'-leader sequence and broadening the substrate specificity of the ribozyme. The chain is Ribonuclease P protein component from Mycoplasma mycoides subsp. mycoides SC (strain CCUG 32753 / NCTC 10114 / PG1).